A 738-amino-acid chain; its full sequence is ATP-dependent RNA helicase rok1 (738 aa).

2 disordered regions span residues 1–112 and 145–176; these read MDAF…DEEV and VASE…EQKK. Over residues 17 to 29 the composition is skewed to polar residues; it reads ATPSSAQSSTRLP. Residues 92–104 are compositionally biased toward basic and acidic residues; that stretch reads SKEEKQEQERSGE. Residues 190-218 carry the Q motif motif; the sequence is ELRSKYKISSRLAENIAEQGFTVPTEVQL. A Helicase ATP-binding domain is found at 231–447; that stretch reads KAGESVEPDL…KSTIKERKEA (217 aa). 244 to 251 is a binding site for ATP; the sequence is APTGSGKT. The interval 316–356 is disordered; the sequence is VVEREDEDDDGDDSSSEDGDESSESEHEERPIAKKSKGKAP. Positions 319–338 are enriched in acidic residues; that stretch reads REDEDDDGDDSSSEDGDESS. A DEAD box motif is present at residues 394-397; sequence DEAD. Residues 487-655 form the Helicase C-terminal domain; the sequence is GLRQLLHPTA…SIQKWLLDAL (169 aa). The disordered stretch occupies residues 663 to 738; that stretch reads KKELKKHGVK…GNESWDGLEN (76 aa). The segment covering 697–706 has biased composition (basic and acidic residues); the sequence is GFERRIENKK.

Belongs to the DEAD box helicase family. DDX52/ROK1 subfamily. As to quaternary structure, interacts with the U3 snoRNA and is associated with the 90S and 40S pre-ribosomes.

It localises to the nucleus. The protein resides in the nucleolus. It catalyses the reaction ATP + H2O = ADP + phosphate + H(+). In terms of biological role, ATP-dependent RNA helicase involved in 40S ribosomal subunit biogenesis. Required for the processing and cleavage of 35S pre-rRNA at sites A0, A1, and A2, leading to mature 18S rRNA. This Aspergillus clavatus (strain ATCC 1007 / CBS 513.65 / DSM 816 / NCTC 3887 / NRRL 1 / QM 1276 / 107) protein is ATP-dependent RNA helicase rok1 (rok1).